The primary structure comprises 338 residues: Cytoskeleton protein RodZ (338 aa).

Over 1–111 (MNTEATHEEN…LGKSRKKRDG (111 aa)) the chain is Cytoplasmic. The 53-residue stretch at 19–71 (LRLAREQLGLSQQVVAERLCLKVSTVRDIEEDKAPADLASTFLRGYIRSYARL) folds into the HTH cro/C1-type domain. Positions 30–49 (QQVVAERLCLKVSTVRDIEE) form a DNA-binding region, H-T-H motif. A helical; Signal-anchor for type II membrane protein transmembrane segment spans residues 112 to 132 (WLMSFTWLVLFVVVGLTGAWW). At 133 to 338 (WQNHKAQQEE…TLNAEQSVTQ (206 aa)) the chain is on the periplasmic side. Polar residues-rich tracts occupy residues 147–180 (ADQSSAELSQNAANSPQSVPLNTDNTADASQDQA) and 189–214 (GDTQNTASNNPQPTPVPSSNTASQQP). The tract at residues 147 to 245 (ADQSSAELSQ…AQSQLPVGQA (99 aa)) is disordered. Residues 220–239 (SQANTDTAAQQNTTQPAQSQ) show a composition bias toward low complexity.

It belongs to the RodZ family.

It is found in the cell inner membrane. In terms of biological role, cytoskeletal protein that is involved in cell-shape control through regulation of the length of the long axis. The chain is Cytoskeleton protein RodZ from Cronobacter sakazakii (strain ATCC BAA-894) (Enterobacter sakazakii).